We begin with the raw amino-acid sequence, 339 residues long: Zinc transporter 3 (339 aa).

A signal peptide spans 1–25; the sequence is MKTKNVKLLFFFFSVSLLLIAVVNA. Topologically, residues 26–54 are extracellular; it reads AEGHSHGGPKCECSHEDDHENKAGARKYK. A helical membrane pass occupies residues 55–75; that stretch reads IAAIPTVLIAGIIGVLFPLLG. The Cytoplasmic segment spans residues 76–86; the sequence is KVFPSLRPETC. The helical transmembrane segment at 87–107 threads the bilayer; it reads FFFVTKAFAAGVILATGFMHV. The Extracellular segment spans residues 108-123; that stretch reads LPEAYEMLNSPCLTSE. A helical membrane pass occupies residues 124–144; it reads AWEFPFTGFIAMIAAILTLSV. At 145–184 the chain is on the cytoplasmic side; it reads DTFATSSFYKSHCKASKRVSDGETGESSVDSEKVQILRTR. The helical transmembrane segment at 185–205 threads the bilayer; the sequence is VIAQVLELGIIVHSVVIGISL. The Extracellular portion of the chain corresponds to 206 to 216; it reads GASQSPDAAKA. A helical membrane pass occupies residues 217–237; it reads LFIALMFHQCFEGLGLGGCIA. Topologically, residues 238 to 247 are cytoplasmic; sequence QGKFKCLSVT. A helical membrane pass occupies residues 248–268; sequence IMSTFFAITTPIGIVVGMGIA. Over 269–278 the chain is Extracellular; the sequence is NSYDESSPTA. A helical transmembrane segment spans residues 279 to 299; it reads LIVQGVLNAASAGILIYMSLV. Over 300–315 the chain is Cytoplasmic; the sequence is DLLAADFTHPKMQSNT. A helical transmembrane segment spans residues 316 to 336; sequence GLQIMAHIALLLGAGLMSLLA. The Extracellular portion of the chain corresponds to 337-339; sequence KWA.

The protein belongs to the ZIP transporter (TC 2.A.5) family. In terms of tissue distribution, expressed predominantly in the roots of zinc-deficient plants.

The protein resides in the cell membrane. Functionally, mediates zinc uptake from the rhizosphere. May also transport other divalent cations. The polypeptide is Zinc transporter 3 (ZIP3) (Arabidopsis thaliana (Mouse-ear cress)).